The primary structure comprises 157 residues: Lipoprotein signal peptidase (157 aa).

Helical transmembrane passes span 10-30 (FIFIGVFLLIFGTDQAIKYAI), 36-56 (YESSIIDIVLVFNKGVAFSLL), 58-78 (FLEGSLKYLQILLILGLFIFL), and 84-104 (LFKAHTIEFGMVFGAGVSNIL). Residues D114 and D131 contribute to the active site. The helical transmembrane segment at 123-143 (DFAIFNFADVMIDVGVGVLLI) threads the bilayer.

The protein belongs to the peptidase A8 family.

The protein localises to the cell inner membrane. The enzyme catalyses Release of signal peptides from bacterial membrane prolipoproteins. Hydrolyzes -Xaa-Yaa-Zaa-|-(S,diacylglyceryl)Cys-, in which Xaa is hydrophobic (preferably Leu), and Yaa (Ala or Ser) and Zaa (Gly or Ala) have small, neutral side chains.. It participates in protein modification; lipoprotein biosynthesis (signal peptide cleavage). This protein specifically catalyzes the removal of signal peptides from prolipoproteins. This is Lipoprotein signal peptidase from Helicobacter acinonychis (strain Sheeba).